The following is a 111-amino-acid chain: Large ribosomal subunit protein P1 (111 aa).

Residues 75-111 (AAAPAAEEKAEEEKKEEEEEKKEEEVDLSGLSGMFGF) are disordered. A compositionally biased stretch (acidic residues) spans 88-101 (KKEEEEEKKEEEVD).

The protein belongs to the eukaryotic ribosomal protein P1/P2 family. As to quaternary structure, part of the 50S ribosomal subunit. Homodimer, it forms part of the ribosomal stalk which helps the ribosome interact with GTP-bound translation factors. Forms a heptameric uL10/P0(P1)2(P1)2(P1)2 complex, where uL10/P0 forms an elongated spine to which the P1 dimers bind in a sequential fashion.

Forms part of the ribosomal stalk, playing a central role in the interaction of the ribosome with GTP-bound translation factors. This is Large ribosomal subunit protein P1 from Aeropyrum pernix (strain ATCC 700893 / DSM 11879 / JCM 9820 / NBRC 100138 / K1).